We begin with the raw amino-acid sequence, 176 residues long: Inorganic pyrophosphatase (176 aa).

3 residues coordinate substrate: Lys31, Arg45, and Tyr57. Mg(2+)-binding residues include Asp67, Asp72, and Asp104. Tyr141 is a binding site for substrate.

The protein belongs to the PPase family. Homohexamer. Requires Mg(2+) as cofactor.

The protein localises to the cytoplasm. It catalyses the reaction diphosphate + H2O = 2 phosphate + H(+). Catalyzes the hydrolysis of inorganic pyrophosphate (PPi) forming two phosphate ions. This chain is Inorganic pyrophosphatase, found in Methanopyrus kandleri (strain AV19 / DSM 6324 / JCM 9639 / NBRC 100938).